We begin with the raw amino-acid sequence, 145 residues long: UPF0179 protein Maeo_1037 (145 aa).

Belongs to the UPF0179 family.

In Methanococcus aeolicus (strain ATCC BAA-1280 / DSM 17508 / OCM 812 / Nankai-3), this protein is UPF0179 protein Maeo_1037.